We begin with the raw amino-acid sequence, 217 residues long: Somatotropin (217 aa).

Residues 1–27 (MATGSHTATLLLAVALLGLPWPQEAGA) form the signal peptide. Residue His46 coordinates Zn(2+). Cys79 and Cys190 form a disulfide bridge. Ser132 carries the phosphoserine modification. Zn(2+) is bound at residue Glu199. The cysteines at positions 207 and 215 are disulfide-linked.

It belongs to the somatotropin/prolactin family.

The protein resides in the secreted. Functionally, plays an important role in growth control. Its major role in stimulating body growth is to stimulate the liver and other tissues to secrete IGF1. It stimulates both the differentiation and proliferation of myoblasts. It also stimulates amino acid uptake and protein synthesis in muscle and other tissues. In Xanthonycticebus pygmaeus (Pygmy slow loris), this protein is Somatotropin (GH1).